A 107-amino-acid polypeptide reads, in one-letter code: Metallothionein-1 (107 aa).

Belongs to the metallothionein superfamily. Type 7 family.

The metallothioneins are involved in the cellular sequestration of toxic metal ions. Binds 12 cadmium ions per molecule. The polypeptide is Metallothionein-1 (Tetrahymena thermophila).